Reading from the N-terminus, the 122-residue chain is MIQMQTQLEVADNSGARKVQCIKVLGGSHRRYAAIGDIIKVSVKEAIPRGKVKKGDVKNAVVVRTKKGVRRPDGSLIRFDSNAAVILNDNLQPIGTRIFGPVTRELRNDKFMKIVSLAPEVL.

This sequence belongs to the universal ribosomal protein uL14 family. As to quaternary structure, part of the 50S ribosomal subunit. Forms a cluster with proteins L3 and L19. In the 70S ribosome, L14 and L19 interact and together make contacts with the 16S rRNA in bridges B5 and B8.

Functionally, binds to 23S rRNA. Forms part of two intersubunit bridges in the 70S ribosome. This Pseudoalteromonas translucida (strain TAC 125) protein is Large ribosomal subunit protein uL14.